A 99-amino-acid chain; its full sequence is Aspartyl/glutamyl-tRNA(Asn/Gln) amidotransferase subunit C (99 aa).

Belongs to the GatC family. As to quaternary structure, heterotrimer of A, B and C subunits.

The catalysed reaction is L-glutamyl-tRNA(Gln) + L-glutamine + ATP + H2O = L-glutaminyl-tRNA(Gln) + L-glutamate + ADP + phosphate + H(+). It catalyses the reaction L-aspartyl-tRNA(Asn) + L-glutamine + ATP + H2O = L-asparaginyl-tRNA(Asn) + L-glutamate + ADP + phosphate + 2 H(+). Allows the formation of correctly charged Asn-tRNA(Asn) or Gln-tRNA(Gln) through the transamidation of misacylated Asp-tRNA(Asn) or Glu-tRNA(Gln) in organisms which lack either or both of asparaginyl-tRNA or glutaminyl-tRNA synthetases. The reaction takes place in the presence of glutamine and ATP through an activated phospho-Asp-tRNA(Asn) or phospho-Glu-tRNA(Gln). This chain is Aspartyl/glutamyl-tRNA(Asn/Gln) amidotransferase subunit C, found in Corynebacterium glutamicum (strain R).